A 180-amino-acid polypeptide reads, in one-letter code: MFRGQMFAVQRMGSALMHGGGGGTRIIGVAAARATAPTVGSSPSMASARFYHPKVIDHYTNPRNVGSLDKNLPNVGTGLVGAPACGDVMKLQIQVNDETGVIENVKFKTFGCGSAIASSSYMTELVRGKTLEDAAKIKNTEIARELSLPPVKLHCSMLAEDAIKAAIKDYQAKRPTTQLK.

This sequence belongs to the NifU family. As to quaternary structure, component of the core Fe-S cluster (ISC) assembly machinery. The cofactor is [2Fe-2S] cluster.

It is found in the mitochondrion matrix. The protein operates within cofactor biosynthesis; iron-sulfur cluster biosynthesis. In terms of biological role, scaffold protein for the de novo synthesis of iron-sulfur (Fe-S) clusters within mitochondria, which is required for maturation of both mitochondrial and cytoplasmic [2Fe-2S] and [4Fe-4S] proteins. First, a [2Fe-2S] cluster is transiently assembled on the scaffold protein ISU1. In a second step, the cluster is released from ISU1, transferred to a glutaredoxin, followed by the formation of mitochondrial [2Fe-2S] proteins, the synthesis of [4Fe-4S] clusters and their target-specific insertion into the recipient apoproteins. Cluster assembly on ISU1 depends on the function of the cysteine desulfurase complex NFS1-ISD11, which serves as the sulfur donor for cluster synthesis, the iron-binding protein frataxin as the putative iron donor, and the electron transfer chain comprised of ferredoxin reductase and ferredoxin, which receive their electrons from NADH. In Kluyveromyces lactis (strain ATCC 8585 / CBS 2359 / DSM 70799 / NBRC 1267 / NRRL Y-1140 / WM37) (Yeast), this protein is Iron sulfur cluster assembly protein 1, mitochondrial (ISU1).